The following is a 108-amino-acid chain: Large ribosomal subunit protein uL24 (108 aa).

It belongs to the universal ribosomal protein uL24 family. As to quaternary structure, part of the 50S ribosomal subunit.

In terms of biological role, one of two assembly initiator proteins, it binds directly to the 5'-end of the 23S rRNA, where it nucleates assembly of the 50S subunit. Functionally, one of the proteins that surrounds the polypeptide exit tunnel on the outside of the subunit. The sequence is that of Large ribosomal subunit protein uL24 from Desulfosudis oleivorans (strain DSM 6200 / JCM 39069 / Hxd3) (Desulfococcus oleovorans).